Reading from the N-terminus, the 269-residue chain is Protein TIFY 11B (269 aa).

The region spanning 100–135 (PESGNSQLTIFFGGKVMVFNEFPEDKAKEIMEVAKE) is the Tify domain. Residues 160 to 181 (PDLNEPTSSGNNEDQETGQQHQ) form a disordered region. Positions 164-181 (EPTSSGNNEDQETGQQHQ) are enriched in polar residues. A Jas motif is present at residues 186–210 (IARRASLHRFFAKRKDRAVARAPYQ). A Nuclear localization signal motif is present at residues 187 to 194 (ARRASLHR). The tract at residues 209-269 (YQVNQHGSHL…QSSKNLELKL (61 aa)) is disordered. Over residues 250 to 269 (MPMEVDKKEGQSSKNLELKL) the composition is skewed to basic and acidic residues.

Belongs to the TIFY/JAZ family. As to quaternary structure, homo- and heterodimer. Interacts with MYC2, AFPH2/NINJA, TIFY10A/JAZ1, TIFY10B/JAZ2, TIFY11A/JAZ5, TIFY5A/JAZ8, TIFY9/JAZ10 and TIFY3B/JAZ12. (Microbial infection) Interacts with the pathogenic Pseudomonas syringae HopZ1a protein. In terms of processing, (Microbial infection) Acetylated by Pseudomonas syringae HopZ1a. Ubiquitinated. Targeted for degradation by the SCF(COI1) E3 ubiquitin ligase-proteasome pathway during jasmonate signaling.

It is found in the nucleus. Its subcellular location is the cell membrane. Functionally, repressor of jasmonate responses. The polypeptide is Protein TIFY 11B (Arabidopsis thaliana (Mouse-ear cress)).